The following is a 236-amino-acid chain: MTKRYWNIILEEMMEAGVHFGHGTRKWNPKMSPYISAKRKGIHITNLIRTARFLSEACDLVFDAASEGKQFLIVGTKKKAADSVARAAIRARCHYVNKKWLGGMLTNWYTTETRLQKFRDLRMQQKTGRLNSFPKRDAAILKRHLAHLETYLGGIKYMTGLPDIVIIVDQQEEYTALRECITLEIPTICLIDTNCDPDLADISIPANDDAIASIRLILNKLVFAICEGRSSYIRNS.

This sequence belongs to the universal ribosomal protein uS2 family.

It localises to the plastid. The protein localises to the chloroplast. The protein is Small ribosomal subunit protein uS2c (rps2) of Glycine max (Soybean).